Here is a 278-residue protein sequence, read N- to C-terminus: 4-deoxy-L-threo-5-hexosulose-uronate ketol-isomerase (278 aa).

4 residues coordinate Zn(2+): His196, His198, Glu203, and His245.

Belongs to the KduI family. Zn(2+) is required as a cofactor.

The enzyme catalyses 5-dehydro-4-deoxy-D-glucuronate = 3-deoxy-D-glycero-2,5-hexodiulosonate. The protein operates within glycan metabolism; pectin degradation; 2-dehydro-3-deoxy-D-gluconate from pectin: step 4/5. Catalyzes the isomerization of 5-dehydro-4-deoxy-D-glucuronate to 3-deoxy-D-glycero-2,5-hexodiulosonate. The protein is 4-deoxy-L-threo-5-hexosulose-uronate ketol-isomerase of Salmonella choleraesuis (strain SC-B67).